We begin with the raw amino-acid sequence, 114 residues long: Protein ELF4-LIKE 4 (114 aa).

The tract at residues 87 to 114 is disordered; that stretch reads SVDASSEGESSGTLKSDGKANQKRFRSG. Positions 89-100 are enriched in polar residues; that stretch reads DASSEGESSGTL.

It belongs to the EARLY FLOWERING 4 family. In terms of assembly, homodimer.

It localises to the nucleus. Component of the central CCA1/LHY-TOC1 feedback loop in the circadian clock that promotes clock accuracy and is required for sustained rhythms in the absence of daily light/dark cycles. The chain is Protein ELF4-LIKE 4 (EFL4) from Arabidopsis thaliana (Mouse-ear cress).